The primary structure comprises 408 residues: Peptidase T-like protein RB0614 (408 aa).

His80 serves as a coordination point for Zn(2+). Asp82 is an active-site residue. Asp142 contributes to the Zn(2+) binding site. Glu174 acts as the Proton acceptor in catalysis. Residues Glu175, Asp198, and His380 each contribute to the Zn(2+) site.

It belongs to the peptidase M20B family. Requires Zn(2+) as cofactor.

In Rhizobium meliloti (strain 1021) (Ensifer meliloti), this protein is Peptidase T-like protein RB0614.